Consider the following 565-residue polypeptide: Adenine deaminase (565 aa).

This sequence belongs to the metallo-dependent hydrolases superfamily. Adenine deaminase family. The cofactor is Mn(2+).

It catalyses the reaction adenine + H2O + H(+) = hypoxanthine + NH4(+). This Sinorhizobium fredii (strain NBRC 101917 / NGR234) protein is Adenine deaminase.